The chain runs to 366 residues: MVPPTGERSLTKAISARALRKVYPGTPPVEALGGVDIDIADNEFFTLLGPSGCGKTTILRLIAGFEHPTSGSLDMFGQSLLDLPPYKRQINTVFQSYALFPHMSVAENIGFGLEMLGKPKSEIKSTVAEMMDLVQMSHLADRQTSQISGGQQQRVALARALAPKPRVLLLDEPLSALDFKLRKNMQLELKRLQTETGITFIFVTHDQEEALTMSDRIAVMSDGAIRQIGSPRDIYDHPADRFVADFIGDTNFLPADVIATEGERVSLRLGSGKTITAPARHAGGGRVTLAVRPEHARLEAEDSGLLPGVLSDAVYFGTDTHFHIALDDGTAFVLRQQNSPDTETRFAKGERVSVSFPGEVAQVLRD.

An ABC transporter domain is found at 14–247 (ISARALRKVY…PADRFVADFI (234 aa)). An ATP-binding site is contributed by 49-56 (GPSGCGKT).

This sequence belongs to the ABC transporter superfamily. Spermidine/putrescine importer (TC 3.A.1.11.1) family. In terms of assembly, the complex is composed of two ATP-binding proteins (PotA), two transmembrane proteins (PotB and PotC) and a solute-binding protein (PotD).

It is found in the cell inner membrane. It catalyses the reaction ATP + H2O + polyamine-[polyamine-binding protein]Side 1 = ADP + phosphate + polyamineSide 2 + [polyamine-binding protein]Side 1.. Functionally, part of the ABC transporter complex PotABCD involved in spermidine/putrescine import. Responsible for energy coupling to the transport system. This is Spermidine/putrescine import ATP-binding protein PotA from Ruegeria pomeroyi (strain ATCC 700808 / DSM 15171 / DSS-3) (Silicibacter pomeroyi).